A 309-amino-acid polypeptide reads, in one-letter code: Ribosomal protein L11 methyltransferase (309 aa).

4 residues coordinate S-adenosyl-L-methionine: T144, G165, D187, and N235.

This sequence belongs to the methyltransferase superfamily. PrmA family.

It localises to the cytoplasm. It carries out the reaction L-lysyl-[protein] + 3 S-adenosyl-L-methionine = N(6),N(6),N(6)-trimethyl-L-lysyl-[protein] + 3 S-adenosyl-L-homocysteine + 3 H(+). Methylates ribosomal protein L11. The protein is Ribosomal protein L11 methyltransferase of Prochlorococcus marinus (strain MIT 9215).